We begin with the raw amino-acid sequence, 340 residues long: Ketol-acid reductoisomerase (NADP(+)) (340 aa).

Residues 3-182 form the KARI N-terminal Rossmann domain; sequence VQMEYEKDVK…GAARVGLLET (180 aa). Residues 26–29, R49, S53, and 83–86 each bind NADP(+); these read YGSQ and DEIQ. Residue H108 is part of the active site. G134 is an NADP(+) binding site. One can recognise a KARI C-terminal knotted domain in the interval 183 to 328; it reads TYKEETEEDL…AELRKAMPFV (146 aa). D191, E195, E227, and E231 together coordinate Mg(2+). Residue S252 participates in substrate binding.

Belongs to the ketol-acid reductoisomerase family. It depends on Mg(2+) as a cofactor.

It carries out the reaction (2R)-2,3-dihydroxy-3-methylbutanoate + NADP(+) = (2S)-2-acetolactate + NADPH + H(+). It catalyses the reaction (2R,3R)-2,3-dihydroxy-3-methylpentanoate + NADP(+) = (S)-2-ethyl-2-hydroxy-3-oxobutanoate + NADPH + H(+). It participates in amino-acid biosynthesis; L-isoleucine biosynthesis; L-isoleucine from 2-oxobutanoate: step 2/4. It functions in the pathway amino-acid biosynthesis; L-valine biosynthesis; L-valine from pyruvate: step 2/4. In terms of biological role, involved in the biosynthesis of branched-chain amino acids (BCAA). Catalyzes an alkyl-migration followed by a ketol-acid reduction of (S)-2-acetolactate (S2AL) to yield (R)-2,3-dihydroxy-isovalerate. In the isomerase reaction, S2AL is rearranged via a Mg-dependent methyl migration to produce 3-hydroxy-3-methyl-2-ketobutyrate (HMKB). In the reductase reaction, this 2-ketoacid undergoes a metal-dependent reduction by NADPH to yield (R)-2,3-dihydroxy-isovalerate. This chain is Ketol-acid reductoisomerase (NADP(+)), found in Streptococcus pneumoniae (strain JJA).